The following is a 463-amino-acid chain: RuvB-like helicase 2 (463 aa).

76–83 (GPPSTGKT) lines the ATP pocket.

Belongs to the RuvB family. As to quaternary structure, may form heterododecamers with RVB1. Component of the SWR1 chromatin remodeling complex, the INO80 chromatin remodeling complex, and of the R2TP complex.

It localises to the nucleus. It catalyses the reaction ATP + H2O = ADP + phosphate + H(+). DNA helicase which participates in several chromatin remodeling complexes, including the SWR1 and the INO80 complexes. The SWR1 complex mediates the ATP-dependent exchange of histone H2A for the H2A variant HZT1 leading to transcriptional regulation of selected genes by chromatin remodeling. The INO80 complex remodels chromatin by shifting nucleosomes and is involved in DNA repair. Also involved in pre-rRNA processing. This chain is RuvB-like helicase 2 (RVB2), found in Cryptococcus neoformans var. neoformans serotype D (strain JEC21 / ATCC MYA-565) (Filobasidiella neoformans).